The primary structure comprises 937 residues: Protein translocase subunit SecA (937 aa).

Residues Gln87, 105–109 (GEGKT), and Asp494 contribute to the ATP site. The interval 881–937 (RGLNYIGPDEGGRASVHSDAEEYGGGTPAAAGTRRERREAARAEGKGKRGPKSRRKH) is disordered. Composition is skewed to basic and acidic residues over residues 890-900 (EGGRASVHSDA) and 913-927 (TRRERREAARAEGKG). The span at 928-937 (KRGPKSRRKH) shows a compositional bias: basic residues.

This sequence belongs to the SecA family. In terms of assembly, monomer and homodimer. Part of the essential Sec protein translocation apparatus which comprises SecA, SecYEG and auxiliary proteins SecDF. Other proteins may also be involved.

The protein resides in the cell membrane. It is found in the cytoplasm. The catalysed reaction is ATP + H2O + cellular proteinSide 1 = ADP + phosphate + cellular proteinSide 2.. Its function is as follows. Part of the Sec protein translocase complex. Interacts with the SecYEG preprotein conducting channel. Has a central role in coupling the hydrolysis of ATP to the transfer of proteins into and across the cell membrane, serving as an ATP-driven molecular motor driving the stepwise translocation of polypeptide chains across the membrane. The sequence is that of Protein translocase subunit SecA from Nocardia farcinica (strain IFM 10152).